A 407-amino-acid chain; its full sequence is Serine/threonine transporter SstT (407 aa).

Helical transmembrane passes span 14–34 (GSLV…ATVS), 48–68 (FVGA…AASI), 82–102 (IVIL…LMSF), 141–161 (AVLT…GLAL), 192–212 (IGIF…AIAG), 216–236 (LLLV…PAIV), 290–310 (IPLG…ILTL), 316–336 (MGIQ…GVSA), and 363–383 (VAMQ…SAET).

This sequence belongs to the dicarboxylate/amino acid:cation symporter (DAACS) (TC 2.A.23) family.

The protein resides in the cell inner membrane. It catalyses the reaction L-serine(in) + Na(+)(in) = L-serine(out) + Na(+)(out). The catalysed reaction is L-threonine(in) + Na(+)(in) = L-threonine(out) + Na(+)(out). Its function is as follows. Involved in the import of serine and threonine into the cell, with the concomitant import of sodium (symport system). The polypeptide is Serine/threonine transporter SstT (Shewanella halifaxensis (strain HAW-EB4)).